We begin with the raw amino-acid sequence, 58 residues long: Large ribosomal subunit protein uL30 (58 aa).

This sequence belongs to the universal ribosomal protein uL30 family. As to quaternary structure, part of the 50S ribosomal subunit.

In Pseudomonas aeruginosa (strain LESB58), this protein is Large ribosomal subunit protein uL30.